Consider the following 482-residue polypeptide: 2-succinylbenzoate--CoA ligase (482 aa).

Belongs to the ATP-dependent AMP-binding enzyme family. MenE subfamily.

It catalyses the reaction 2-succinylbenzoate + ATP + CoA = 2-succinylbenzoyl-CoA + AMP + diphosphate. It functions in the pathway quinol/quinone metabolism; 1,4-dihydroxy-2-naphthoate biosynthesis; 1,4-dihydroxy-2-naphthoate from chorismate: step 5/7. The protein operates within quinol/quinone metabolism; menaquinone biosynthesis. Its function is as follows. Converts 2-succinylbenzoate (OSB) to 2-succinylbenzoyl-CoA (OSB-CoA). The chain is 2-succinylbenzoate--CoA ligase from Bacillus thuringiensis subsp. konkukian (strain 97-27).